A 92-amino-acid polypeptide reads, in one-letter code: Small ribosomal subunit protein bS18c (92 aa).

It belongs to the bacterial ribosomal protein bS18 family. In terms of assembly, part of the 30S ribosomal subunit.

It is found in the plastid. The protein is Small ribosomal subunit protein bS18c (rps18) of Epifagus virginiana (Beechdrops).